A 522-amino-acid polypeptide reads, in one-letter code: Lysine--tRNA ligase (522 aa).

The 'HIGH' region signature appears at 44 to 52 (PSGLPHIGT). Residues 290–294 (KISKS) carry the 'KMSKS' region motif. An ATP-binding site is contributed by Lys-293.

The protein belongs to the class-I aminoacyl-tRNA synthetase family.

The protein resides in the cytoplasm. The catalysed reaction is tRNA(Lys) + L-lysine + ATP = L-lysyl-tRNA(Lys) + AMP + diphosphate. The polypeptide is Lysine--tRNA ligase (Rickettsia rickettsii (strain Iowa)).